Here is a 327-residue protein sequence, read N- to C-terminus: Probable cell division protein WhiA (327 aa).

Positions 275-308 (SLEELGRLADPPMTKDAVAGRIRRLLSMADRKAK) form a DNA-binding region, H-T-H motif.

The protein belongs to the WhiA family.

Its function is as follows. Involved in cell division and chromosome segregation. This is Probable cell division protein WhiA from Mycobacterium avium (strain 104).